Reading from the N-terminus, the 553-residue chain is Mucolipin-3 (553 aa).

The Cytoplasmic portion of the chain corresponds to 1–62; it reads MADPEVVVSS…FWARGRKPWK (62 aa). Residues 52-62 form an interaction with phosphoinositides region; sequence KFWARGRKPWK. The chain crosses the membrane as a helical span at residues 63-83; the sequence is LAIQILKIAMVTIQLVLFGLS. The Extracellular portion of the chain corresponds to 84–283; sequence NQMVVAFKEE…VSGSIQKNTH (200 aa). The tract at residues 104-118 is extracellular/lumenal pore loop; that stretch reads KGYMDRMDDTYAVYT. N138, N172, and N205 each carry an N-linked (GlcNAc...) asparagine glycan. Residues C159 and C185 are joined by a disulfide bond. C238 and C269 are oxidised to a cystine. The helical transmembrane segment at 284-304 threads the bilayer; that stretch reads YMMIFDAFVILTCLVSLILCI. The Cytoplasmic portion of the chain corresponds to 305 to 341; it reads RSVIRGLQLQQEFVNFFLLHYKKEVSVSDQMEFVNGW. Residues 342–362 form a helical membrane-spanning segment; sequence YIMIIISDILTIIGSILKMEI. Over 363 to 371 the chain is Extracellular; it reads QAKSLTSYD. A helical membrane pass occupies residues 372-392; the sequence is VCSILLGTSTMLVWLGVIRYL. The Cytoplasmic portion of the chain corresponds to 393–414; it reads GFFAKYNLLILTLQAALPNVIR. The chain crosses the membrane as a helical span at residues 415–435; sequence FCCCAAMIYLGYCFCGWIVLG. Residues 436 to 443 are Extracellular-facing; the sequence is PYHDKFRS. Positions 444–464 form an intramembrane region, pore-forming; that stretch reads LNMVSECLFSLINGDDMFATF. Positions 456 to 459 match the Selectivity filter motif; the sequence is NGDD. Residues 465 to 475 are Extracellular-facing; that stretch reads AKMQQKSYLVW. A helical membrane pass occupies residues 476–497; sequence LFSRIYLYSFISLFIYMILSLF. Topologically, residues 498-553 are cytoplasmic; sequence IALITDTYETIKQYQQDGFPETELRTFISECKDLPNSGKYRLEDDPPVSLFCCCKK.

It belongs to the transient receptor (TC 1.A.4) family. Polycystin subfamily. MCOLN3 sub-subfamily. Homotetramer. Can heterooligomerize with MCOLN1; heteromeric assemblies have different channel properties as compared to the respective homooligomers and may be tissue-specific. May heterooligomerize with TRPV5 to form a functional distinct ion channel. Interacts with GABARAPL2. N-glycosylated.

It localises to the cell membrane. The protein localises to the early endosome membrane. It is found in the late endosome membrane. Its subcellular location is the lysosome membrane. The protein resides in the cytoplasmic vesicle. It localises to the autophagosome membrane. It catalyses the reaction Ca(2+)(in) = Ca(2+)(out). The catalysed reaction is K(+)(in) = K(+)(out). It carries out the reaction Na(+)(in) = Na(+)(out). Its activity is regulated as follows. Channel activity is activated by PtdIns(3,5)P2 (phosphatidylinositol 3,5-bisphosphate). Inhibited by lumenal H(+) and Na(+). The channel pore shows dynamic behavior and undergoes spontaneous, Ca(2+)-dependent modulation when conducting Ca(2+). Nonselective cation channel probably playing a role in the regulation of membrane trafficking events. Acts as a Ca(2+)-permeable cation channel with inwardly rectifying activity. Mediates release of Ca(2+) from endosomes to the cytoplasm, contributes to endosomal acidification and is involved in the regulation of membrane trafficking and fusion in the endosomal pathway. Also permeable to Mg(2+), Na(+) and K(+). Does not seem to act as mechanosensory transduction channel in inner ear sensory hair cells. Proposed to play a critical role at the cochlear stereocilia ankle-link region during hair-bundle growth. Involved in the regulation of autophagy. Through association with GABARAPL2 may be involved in autophagosome formation possibly providing Ca(2+) for the fusion process. Through a possible and probably tissue-specific heteromerization with MCOLN1 may be at least in part involved in many lysosome-dependent cellular events. Possible heteromeric ion channel assemblies with TRPV5 show pharmacological similarity with TRPML3. This Homo sapiens (Human) protein is Mucolipin-3 (MCOLN3).